A 431-amino-acid polypeptide reads, in one-letter code: Phosphoribosylamine--glycine ligase (431 aa).

The ATP-grasp domain occupies 109–316 (KDFLARHGIP…LVDLLEAAID (208 aa)). 135-196 (VREKGTPIVV…EEFLDGEEAS (62 aa)) lines the ATP pocket. E286 and N288 together coordinate Mg(2+).

Belongs to the GARS family. Requires Mg(2+) as cofactor. Mn(2+) is required as a cofactor.

The enzyme catalyses 5-phospho-beta-D-ribosylamine + glycine + ATP = N(1)-(5-phospho-beta-D-ribosyl)glycinamide + ADP + phosphate + H(+). Its pathway is purine metabolism; IMP biosynthesis via de novo pathway; N(1)-(5-phospho-D-ribosyl)glycinamide from 5-phospho-alpha-D-ribose 1-diphosphate: step 2/2. The chain is Phosphoribosylamine--glycine ligase from Xanthomonas axonopodis pv. citri (strain 306).